Consider the following 377-residue polypeptide: Actin-related protein 2/3 complex subunit 1 (377 aa).

5 WD repeats span residues 9–48 (ILPK…WKHA), 53–92 (DHDK…TWKQ), 98–139 (RLNR…WVSK), 144–183 (PLRS…VDAK), and 203–242 (PSGG…QPPR). Residues 293–313 (GTSKTSFTHTGNTGEGREEEG) are disordered. One copy of the WD 6 repeat lies at 342 to 376 (VHQNMIATLRPYAGTPGNITAFTSSGTDGRVVLWT).

The protein belongs to the WD repeat ARPC1 family. In terms of assembly, component of the Arp2/3 complex composed of arp2, act2, arc1/p41-ARC, arc2/p34-ARC, arc3/p21-ARC, arc4/p20-ARC and arc5/p16-ARC.

The protein localises to the cytoplasm. Its subcellular location is the cytoskeleton. The protein resides in the actin patch. Its function is as follows. Functions as a component of the Arp2/3 complex which is involved in regulation of actin polymerization and together with an activating nucleation-promoting factor (NPF) mediates the formation of branched actin networks. This chain is Actin-related protein 2/3 complex subunit 1 (arc1), found in Schizosaccharomyces pombe (strain 972 / ATCC 24843) (Fission yeast).